The chain runs to 118 residues: Acidic phospholipase A2 PA-3 (118 aa).

Intrachain disulfides connect C11–C71, C27–C117, C29–C45, C44–C98, C51–C91, C60–C84, and C78–C89. Residues Y28, G30, and G32 each coordinate Ca(2+). The active site involves H48. D49 contributes to the Ca(2+) binding site. The active site involves D92.

It belongs to the phospholipase A2 family. Group I subfamily. D49 sub-subfamily. Requires Ca(2+) as cofactor. Expressed by the venom gland.

Its subcellular location is the secreted. It carries out the reaction a 1,2-diacyl-sn-glycero-3-phosphocholine + H2O = a 1-acyl-sn-glycero-3-phosphocholine + a fatty acid + H(+). In terms of biological role, PLA2 catalyzes the calcium-dependent hydrolysis of the 2-acyl groups in 3-sn-phosphoglycerides. The chain is Acidic phospholipase A2 PA-3 from Pseudechis australis (Mulga snake).